Consider the following 919-residue polypeptide: MFRSNARALNRALERLKNVQTKVNEALKRSGIQEKSLERKLRIWLRKVEENVPLGELILEKRSSCAIWLSDKDVEILEKVKRLEEQGQDLIKKISVNKSSREIVERVLGPSFHPQKTALEMLDKLKDCLKKKNVQKIGVWGMGGVGKTTLVRTLNNDLLKYAATQQFALVIWVTVSKDFDLKRVQMDIAKRLGKRFTREQMNQLGLTICERLIDLKNFLLILDDVWHPIDLDQLGIPLALERSKDSKVVLTSRRLEVCQQMMTNENIKVACLQEKEAWELFCHNVGEVANSDNVKPIAKDVSHECCGLPLAIITIGRTLRGKPQVEVWKHTLNLLKRSAPSIDTEEKIFGTLKLSYDFLQDNMKSCFLFCALFPEDYSIKVSELIMYWVAEGLLDGQHHYEDMMNEGVTLVERLKDSCLLEDGDSCDTVKMHDVVRDFAIWFMSSQGEGFHSLVMAGRGLIEFPQDKFVSSVQRVSLMANKLERLPNNVIEGVETLVLLLQGNSHVKEVPNGFLQAFPNLRILDLSGVRIRTLPDSFSNLHSLRSLVLRNCKKLRNLPSLESLVKLQFLDLHESAIRELPRGLEALSSLRYICVSNTYQLQSIPAGTILQLSSLEVLDMAGSAYSWGIKGEEREGQATLDEVTCLPHLQFLAIKLLDVLSFSYEFDSLTKRLTKFQFLFSPIRSVSPPGTGEGCLAISDVNVSNASIGWLLQHVTSLDLNYCEGLNGMFENLVTKSKSSFVAMKALSIHYFPSLSLASGCESQLDLFPNLEELSLDNVNLESIGELNGFLGMRLQKLKLLQVSGCRQLKRLFSDQILAGTLPNLQEIKVVSCLRLEELFNFSSVPVDFCAESLLPKLTVIKLKYLPQLRSLCNDRVVLESLEHLEVESCESLKNLPFVPGNTGMINEQMAWEYMSRTLG.

Coiled coils occupy residues 1–30 (MFRS…LKRS) and 74–95 (VEIL…KKIS). The region spanning 121–399 (MLDKLKDCLK…AEGLLDGQHH (279 aa)) is the NB-ARC domain. 141 to 148 (GMGGVGKT) lines the ATP pocket. 8 LRR repeats span residues 447-468 (GEGF…QDKF), 469-492 (VSSV…VIEG), 494-516 (ETLV…FLQA), 519-540 (NLRI…FSNL), 542-564 (SLRS…ESLV), 565-587 (KLQF…EALS), 588-610 (SLRY…TILQ), and 611-635 (LSSL…EREG).

It belongs to the disease resistance NB-LRR family.

Probable disease resistance protein. This is Probable disease resistance protein At4g27220 from Arabidopsis thaliana (Mouse-ear cress).